A 483-amino-acid chain; its full sequence is UDP-N-acetylmuramoyl-L-alanyl-D-glutamate--2,6-diaminopimelate ligase (483 aa).

Serine 30 lines the UDP-N-acetyl-alpha-D-muramoyl-L-alanyl-D-glutamate pocket. 109–115 is an ATP binding site; sequence GTNGKTT. UDP-N-acetyl-alpha-D-muramoyl-L-alanyl-D-glutamate is bound by residues 151 to 152, serine 178, and arginine 186; that span reads TT. Residue lysine 218 is modified to N6-carboxylysine. Meso-2,6-diaminopimelate contacts are provided by residues arginine 380, 403–406, glycine 453, and glutamate 457; that span reads DNPR. The short motif at 403–406 is the Meso-diaminopimelate recognition motif element; sequence DNPR.

It belongs to the MurCDEF family. MurE subfamily. Mg(2+) serves as cofactor. Post-translationally, carboxylation is probably crucial for Mg(2+) binding and, consequently, for the gamma-phosphate positioning of ATP.

Its subcellular location is the cytoplasm. The enzyme catalyses UDP-N-acetyl-alpha-D-muramoyl-L-alanyl-D-glutamate + meso-2,6-diaminopimelate + ATP = UDP-N-acetyl-alpha-D-muramoyl-L-alanyl-gamma-D-glutamyl-meso-2,6-diaminopimelate + ADP + phosphate + H(+). It functions in the pathway cell wall biogenesis; peptidoglycan biosynthesis. In terms of biological role, catalyzes the addition of meso-diaminopimelic acid to the nucleotide precursor UDP-N-acetylmuramoyl-L-alanyl-D-glutamate (UMAG) in the biosynthesis of bacterial cell-wall peptidoglycan. This Chlamydia caviae (strain ATCC VR-813 / DSM 19441 / 03DC25 / GPIC) (Chlamydophila caviae) protein is UDP-N-acetylmuramoyl-L-alanyl-D-glutamate--2,6-diaminopimelate ligase.